Reading from the N-terminus, the 481-residue chain is MIQVLLVTICLAVFPYQGSSIILESGNVDDYEVVYPQKVTALPKGAVQPKYEDAMQYEFKVNGEPVVLHLEKNKGLFSEDYSETHYSPDGREITTYPSVEDHCYHHGRVHNDADSTASISACDGLKGHFKLQGEMYLIEPLELSDSEAHAVFKYENVEKEDEAPKMCGVTQNWESDESIKKASQLYLTPEQQRFPQRHIELAIVVDHGMYTKYSSNFKKIRKRVHQMVSNINEMCRPLNIAITLSLLDVWSEKDLITVQADAPTTAGLFGDWRERVLLKKKNHDHAQLLTDINFTGDTIGWAYVGGMCNAKYSVGTVKDHSSNVFVVAVTMTHEIGHNLGMEHDDKDKCKCEACIMAPVISDKQSKLFSDCSKDYYQTFLTNKKPQCILNAPLRTDTVSTPISGNEFLEAGEECDCGSPSNPCCDVGTCKLSPGAQCADGLCCDQCRFKKKGKICRRARGDNPDDRCTGQSADCPRNGLYG.

The signal sequence occupies residues 1–20 (MIQVLLVTICLAVFPYQGSS). Positions 21 to 190 (IILESGNVDD…KASQLYLTPE (170 aa)) are excised as a propeptide. Residues 197–392 (RHIELAIVVD…KKPQCILNAP (196 aa)) enclose the Peptidase M12B domain. Positions 200 and 284 each coordinate Ca(2+). 3 cysteine pairs are disulfide-bonded: C308–C387, C349–C371, and C351–C354. Residue H333 participates in Zn(2+) binding. E334 is an active-site residue. The Zn(2+) site is built by H337 and H343. The Ca(2+) site is built by C387 and N390. A propeptide spanning residues 393-410 (LRTDTVSTPISGNEFLEA) is cleaved from the precursor. The Disintegrin domain occupies 400-481 (TPISGNEFLE…ADCPRNGLYG (82 aa)). 6 cysteine pairs are disulfide-bonded: C414–C429, C416–C424, C423–C446, C437–C443, C442–C467, and C455–C474. A Cell attachment site motif is present at residues 459-461 (RGD).

It belongs to the venom metalloproteinase (M12B) family. P-II subfamily. P-IIa sub-subfamily. As to quaternary structure, monomer. Zn(2+) serves as cofactor. As to expression, expressed by the venom gland.

It localises to the secreted. Impairs hemostasis in the envenomed animal. Its function is as follows. Inhibits platelet aggregation induced by ADP and collagen. Acts by inhibiting fibrinogen interaction with platelet receptors GPIIb/GPIIIa (ITGA2B/ITGB3). Has antitumor-growth activity. The chain is Zinc metalloproteinase/disintegrin from Protobothrops jerdonii (Jerdon's pitviper).